Consider the following 510-residue polypeptide: Mitogen-activated protein kinase 9 (510 aa).

Positions 23–314 (YQIQEVIGKG…AEEALADPYF (292 aa)) constitute a Protein kinase domain. ATP contacts are provided by residues 29-37 (IGKGSYGVV) and lysine 52. Residue aspartate 149 is the Proton acceptor of the active site. Phosphothreonine is present on threonine 185. The TXY signature appears at 185–187 (TDY). Tyrosine 187 carries the phosphotyrosine modification. The residue at position 190 (threonine 190) is a Phosphothreonine. The disordered stretch occupies residues 393-461 (NYGKGEKGSP…SDYRNGTSQT (69 aa)). Positions 410–431 (LPRERVPAPKKENGSHNHDIEN) are enriched in basic and acidic residues. The span at 433–461 (SIASLVTTLESPPTSQHEGSDYRNGTSQT) shows a compositional bias: polar residues.

This sequence belongs to the protein kinase superfamily. CMGC Ser/Thr protein kinase family. MAP kinase subfamily. Dually phosphorylated on Thr-185 and Tyr-187, which activates the enzyme.

It carries out the reaction L-seryl-[protein] + ATP = O-phospho-L-seryl-[protein] + ADP + H(+). The enzyme catalyses L-threonyl-[protein] + ATP = O-phospho-L-threonyl-[protein] + ADP + H(+). With respect to regulation, activated by threonine and tyrosine phosphorylation. This chain is Mitogen-activated protein kinase 9 (MPK9), found in Arabidopsis thaliana (Mouse-ear cress).